Consider the following 329-residue polypeptide: Cytosolic Fe-S cluster assembly factor NBP35 (329 aa).

The interval 1-33 is disordered; sequence MAPSQVEDISKTELETPEHCPGPESEQAGKEDA. The segment covering 8–18 has biased composition (basic and acidic residues); sequence DISKTELETPE. [4Fe-4S] cluster contacts are provided by Cys-20, Cys-34, Cys-37, and Cys-43. Residue 74–81 coordinates ATP; that stretch reads GKGGVGKS. [4Fe-4S] cluster is bound by residues Cys-248 and Cys-251.

The protein belongs to the Mrp/NBP35 ATP-binding proteins family. NUBP1/NBP35 subfamily. Heterotetramer of 2 NBP35 and 2 CFD1 chains. Requires [4Fe-4S] cluster as cofactor.

It is found in the cytoplasm. The protein resides in the nucleus. Component of the cytosolic iron-sulfur (Fe/S) protein assembly (CIA) machinery. Required for maturation of extramitochondrial Fe-S proteins. The NBP35-CFD1 heterotetramer forms a Fe-S scaffold complex, mediating the de novo assembly of an Fe-S cluster and its transfer to target apoproteins. Required for biogenesis and export of both ribosomal subunits, which may reflect a role in assembly of the Fe/S clusters in RLI1, a protein which performs rRNA processing and ribosome export. The sequence is that of Cytosolic Fe-S cluster assembly factor NBP35 from Debaryomyces hansenii (strain ATCC 36239 / CBS 767 / BCRC 21394 / JCM 1990 / NBRC 0083 / IGC 2968) (Yeast).